The primary structure comprises 446 residues: UDP-N-acetylmuramoylalanine--D-glutamate ligase (446 aa).

115-121 (GTNGKTT) is a binding site for ATP.

The protein belongs to the MurCDEF family.

Its subcellular location is the cytoplasm. The catalysed reaction is UDP-N-acetyl-alpha-D-muramoyl-L-alanine + D-glutamate + ATP = UDP-N-acetyl-alpha-D-muramoyl-L-alanyl-D-glutamate + ADP + phosphate + H(+). It participates in cell wall biogenesis; peptidoglycan biosynthesis. Cell wall formation. Catalyzes the addition of glutamate to the nucleotide precursor UDP-N-acetylmuramoyl-L-alanine (UMA). The polypeptide is UDP-N-acetylmuramoylalanine--D-glutamate ligase (Pelobacter propionicus (strain DSM 2379 / NBRC 103807 / OttBd1)).